We begin with the raw amino-acid sequence, 441 residues long: Ribulose bisphosphate carboxylase large chain (441 aa).

Substrate is bound by residues Asn-89 and Thr-139. The active-site Proton acceptor is the Lys-141. Lys-143 lines the substrate pocket. Positions 167, 169, and 170 each coordinate Mg(2+). Lys-167 is subject to N6-carboxylysine. His-260 functions as the Proton acceptor in the catalytic mechanism. Substrate-binding residues include Arg-261, His-293, and Ser-345.

This sequence belongs to the RuBisCO large chain family. Type I subfamily. Heterohexadecamer of 8 large chains and 8 small chains; disulfide-linked. The disulfide link is formed within the large subunit homodimers. Requires Mg(2+) as cofactor. The disulfide bond which can form in the large chain dimeric partners within the hexadecamer appears to be associated with oxidative stress and protein turnover.

Its subcellular location is the plastid. It is found in the chloroplast. The catalysed reaction is 2 (2R)-3-phosphoglycerate + 2 H(+) = D-ribulose 1,5-bisphosphate + CO2 + H2O. It carries out the reaction D-ribulose 1,5-bisphosphate + O2 = 2-phosphoglycolate + (2R)-3-phosphoglycerate + 2 H(+). In terms of biological role, ruBisCO catalyzes two reactions: the carboxylation of D-ribulose 1,5-bisphosphate, the primary event in carbon dioxide fixation, as well as the oxidative fragmentation of the pentose substrate in the photorespiration process. Both reactions occur simultaneously and in competition at the same active site. The polypeptide is Ribulose bisphosphate carboxylase large chain (Viola sororia (Woolly blue violet)).